Reading from the N-terminus, the 352-residue chain is MTTEDYKKLAPYNIRRSSISGTEEEEVPFTPDEQKRRSQAALGVLRKTAPREHSYVLSAAKKTTSSPTQELQSPFLAKRVDVVDEDVLPEKNQEPPALARPDSGLSSSTTEKIAHRQITPPTAELHLVAPDLEALSTPDSCEENNAAPKIIKEIPGTLQDGQSDPTVASQQLADLSILEPLGSPSGAEQQIKAEDCTNMLMSPSSCMVTVTVSDTSEQSQLCVPGVSSKVDSSSTIKGILFVKEYMNTSEVSSGKPVSSHCDSPSSIEDSLDLAKKPPHEGTPSERPTEGVCTYCSHEIQDCPKITLEHLGICCHEYCFKCGICNKPMGDLLDQIFIHRDTIHCGKCYEKLF.

Disordered stretches follow at residues 1–73 and 86–121; these read MTTE…ELQS and DVLP…ITPP. A Phosphoserine modification is found at S18. Positions 61–72 are enriched in polar residues; that stretch reads KKTTSSPTQELQ. T137 bears the Phosphothreonine mark. Polar residues predominate over residues 251–268; that stretch reads VSSGKPVSSHCDSPSSIE. The segment at 251 to 287 is disordered; that stretch reads VSSGKPVSSHCDSPSSIEDSLDLAKKPPHEGTPSERP. The segment covering 272–287 has biased composition (basic and acidic residues); it reads DLAKKPPHEGTPSERP. The LIM zinc-binding domain occupies 292 to 347; the sequence is CTYCSHEIQDCPKITLEHLGICCHEYCFKCGICNKPMGDLLDQIFIHRDTIHCGKC.

Expressed in skin, kidney, ovary, testis. Also expressed in brain, cartilage, heart, lung, spleen and thymus.

The protein localises to the cytoplasm. It is found in the cytoskeleton. It localises to the cell junction. The protein resides in the focal adhesion. In terms of biological role, may be involved in the regulation of cellular proliferation and/or differentiation. In Mus musculus (Mouse), this protein is Zinc finger protein 185 (Znf185).